The sequence spans 164 residues: Cytochrome c-type biogenesis protein CcmE (164 aa).

Residues 1-8 (MNPRRKSR) are Cytoplasmic-facing. The chain crosses the membrane as a helical; Signal-anchor for type II membrane protein span at residues 9-29 (LYLAVVVLIGIGLTTTLVLYA). Residues 30–164 (LRSNIDLFYT…NSTAAQGNAS (135 aa)) lie on the Periplasmic side of the membrane. Heme-binding residues include His130 and Tyr134. Positions 131-150 (DEKYTPPEVKEAMKENHTRP) are enriched in basic and acidic residues. The interval 131-164 (DEKYTPPEVKEAMKENHTRPAEAYNSTAAQGNAS) is disordered. Positions 154–164 (YNSTAAQGNAS) are enriched in polar residues.

It belongs to the CcmE/CycJ family.

The protein resides in the cell inner membrane. In terms of biological role, heme chaperone required for the biogenesis of c-type cytochromes. Transiently binds heme delivered by CcmC and transfers the heme to apo-cytochromes in a process facilitated by CcmF and CcmH. This Yersinia enterocolitica serotype O:8 / biotype 1B (strain NCTC 13174 / 8081) protein is Cytochrome c-type biogenesis protein CcmE.